The following is a 699-amino-acid chain: Nucleolar and coiled-body phosphoprotein 1 (699 aa).

In terms of domain architecture, LisH spans Val-10 to Gln-42. Lys-33 carries the post-translational modification N6-acetyllysine. The segment at Glu-65–Ser-637 is disordered. Glycyl lysine isopeptide (Lys-Gly) (interchain with G-Cter in SUMO2) cross-links involve residues Lys-67 and Lys-76. Residues Ser-84–Glu-95 form an Acidic serine cluster 1 repeat. An 11 X 12 AA approximate repeats of an acidic serine cluster region spans residues Ser-84–Glu-566. The span at Asp-86–Val-97 shows a compositional bias: acidic residues. Residues Ser-87, Ser-90, and Ser-91 each carry the phosphoserine modification. Position 91 is a diphosphoserine (Ser-91). Residues Pro-100–Lys-110 show a composition bias toward low complexity. One copy of the Acidic serine cluster 2 repeat lies at Glu-125–Asp-136. The span at Gln-144–Ala-159 shows a compositional bias: low complexity. The stretch at Ser-167–Glu-178 is one Acidic serine cluster 3 repeat. A Glycyl lysine isopeptide (Lys-Gly) (interchain with G-Cter in SUMO2) cross-link involves residue Lys-186. Residue Thr-188 is modified to Phosphothreonine. Lys-193 participates in a covalent cross-link: Glycyl lysine isopeptide (Lys-Gly) (interchain with G-Cter in SUMO2). Low complexity-rich tracts occupy residues Lys-193–Ser-227 and Ala-236–Thr-261. Residues Arg-204–Gly-382 form an interaction with RPA194 region. The Acidic serine cluster 4 repeat unit spans residues Ser-221–Glu-232. The stretch at Ser-264–Glu-275 is one Acidic serine cluster 5 repeat. Pro residues predominate over residues Ser-291–Lys-301. Acidic residues predominate over residues Ser-321–Ser-333. The stretch at Ser-325–Glu-336 is one Acidic serine cluster 6 repeat. Residues Lys-342 and Lys-347 each participate in a glycyl lysine isopeptide (Lys-Gly) (interchain with G-Cter in SUMO2) cross-link. Phosphoserine occurs at positions 362, 363, and 366. The Acidic serine cluster 7 repeat unit spans residues Ser-363–Glu-375. The span at Ser-366–Glu-375 shows a compositional bias: acidic residues. A compositionally biased stretch (polar residues) spans Ala-381–Ser-397. Glycyl lysine isopeptide (Lys-Gly) (interchain with G-Cter in SUMO2) cross-links involve residues Lys-390 and Lys-396. At Ser-397 the chain carries Phosphoserine. The span at Pro-398–Pro-409 shows a compositional bias: low complexity. Residues Lys-401 and Lys-407 each participate in a glycyl lysine isopeptide (Lys-Gly) (interchain with G-Cter in SUMO2) cross-link. An N6-acetyllysine; alternate modification is found at Lys-415. Residue Lys-415 forms a Glycyl lysine isopeptide (Lys-Gly) (interchain with G-Cter in SUMO1); alternate linkage. Lys-415 participates in a covalent cross-link: Glycyl lysine isopeptide (Lys-Gly) (interchain with G-Cter in SUMO2); alternate. One copy of the Acidic serine cluster 8 repeat lies at Ser-425–Glu-436. Residues Lys-440 and Lys-452 each participate in a glycyl lysine isopeptide (Lys-Gly) (interchain with G-Cter in SUMO2) cross-link. 2 stretches are compositionally biased toward low complexity: residues Met-441–Ser-476 and Ala-498–Asp-523. The residue at position 456 (Ser-456) is a Phosphoserine. An Acidic serine cluster 9 repeat occupies Ser-470–Glu-481. Residue Lys-505 forms a Glycyl lysine isopeptide (Lys-Gly) (interchain with G-Cter in SUMO2) linkage. Ser-508 carries the post-translational modification Phosphoserine. The stretch at Ser-519 to Glu-529 is one Acidic serine cluster 10 repeat. Ser-538 bears the Phosphoserine mark. Residues Asn-547–Asn-556 show a composition bias toward polar residues. The stretch at Gln-555–Glu-566 is one Acidic serine cluster 11 repeat. Position 563 is a phosphoserine (Ser-563). Residue Lys-572 forms a Glycyl lysine isopeptide (Lys-Gly) (interchain with G-Cter in SUMO1) linkage. Lys-579 participates in a covalent cross-link: Glycyl lysine isopeptide (Lys-Gly) (interchain with G-Cter in SUMO2). Ser-580 and Ser-582 each carry phosphoserine. Lys-604 is covalently cross-linked (Glycyl lysine isopeptide (Lys-Gly) (interchain with G-Cter in SUMO2)). 2 positions are modified to phosphothreonine: Thr-607 and Thr-610. A Glycyl lysine isopeptide (Lys-Gly) (interchain with G-Cter in SUMO2) cross-link involves residue Lys-613. Ser-622 is modified (phosphoserine). The span at Arg-627–Ser-637 shows a compositional bias: basic and acidic residues. Ser-643 bears the Phosphoserine mark. Lys-647 participates in a covalent cross-link: Glycyl lysine isopeptide (Lys-Gly) (interchain with G-Cter in SUMO2). Position 663 is an N6-acetyllysine; alternate (Lys-663). Lys-663 is covalently cross-linked (Glycyl lysine isopeptide (Lys-Gly) (interchain with G-Cter in SUMO2); alternate). Arg-683 is subject to Omega-N-methylarginine. Ser-686 carries the post-translational modification Phosphoserine. A Glycyl lysine isopeptide (Lys-Gly) (interchain with G-Cter in SUMO2) cross-link involves residue Lys-695. The residue at position 698 (Ser-698) is a Phosphoserine.

The protein belongs to the NOLC1 family. In terms of assembly, heterodimer; heterodimerizes with TCOF1 following monoubiquitination. Interacts with RNA polymerase I 194 kDa subunit (RPA194) and with casein kinase-II. Interacts with DKC1/NAP57, NOP58 and fibrillarin. Undergoes rapid and massive phosphorylation/dephosphorylation cycles on CK2 and PKC sites. NOLC1 is one of the mostly phosphorylated proteins in the cell. In terms of processing, ubiquitinated. Monoubiquitination by the BCR(KBTBD8) complex promotes the formation of a NOLC1-TCOF1 complex that acts as a platform to connect RNA polymerase I with enzymes responsible for ribosomal processing and modification, leading to remodel the translational program of differentiating cells in favor of neural crest specification. Post-translationally, pyrophosphorylated by 5-diphosphoinositol pentakisphosphate (5-IP7). Serine pyrophosphorylation is achieved by Mg(2+)-dependent, but enzyme independent transfer of a beta-phosphate from a inositol pyrophosphate to a pre-phosphorylated serine residue.

It is found in the nucleus. The protein resides in the nucleolus. Its subcellular location is the cytoplasm. Nucleolar protein that acts as a regulator of RNA polymerase I by connecting RNA polymerase I with enzymes responsible for ribosomal processing and modification. Required for neural crest specification: following monoubiquitination by the BCR(KBTBD8) complex, associates with TCOF1 and acts as a platform to connect RNA polymerase I with enzymes responsible for ribosomal processing and modification, leading to remodel the translational program of differentiating cells in favor of neural crest specification. Involved in nucleologenesis, possibly by playing a role in the maintenance of the fundamental structure of the fibrillar center and dense fibrillar component in the nucleolus. It has intrinsic GTPase and ATPase activities. This is Nucleolar and coiled-body phosphoprotein 1 from Homo sapiens (Human).